Consider the following 118-residue polypeptide: Small ribosomal subunit protein uS19c (118 aa).

Positions 92–118 (KKSSKKVTKNKKSIKKNIKTTSKKFKK) are disordered.

Belongs to the universal ribosomal protein uS19 family.

It is found in the plastid. Protein S19 forms a complex with S13 that binds strongly to the 16S ribosomal RNA. This Euglena longa (Euglenophycean alga) protein is Small ribosomal subunit protein uS19c (rps19).